The primary structure comprises 477 residues: Bifunctional protein HldE (477 aa).

The interval 1 to 318 is ribokinase; it reads MKVNLPAFER…ENAVRGRADT (318 aa). An ATP-binding site is contributed by 195 to 198; it reads NLSE. Residue D264 is part of the active site. Positions 344 to 477 are cytidylyltransferase; it reads MTNGVFDILH…IKKIQTESEK (134 aa).

In the N-terminal section; belongs to the carbohydrate kinase PfkB family. This sequence in the C-terminal section; belongs to the cytidylyltransferase family. In terms of assembly, homodimer.

It catalyses the reaction D-glycero-beta-D-manno-heptose 7-phosphate + ATP = D-glycero-beta-D-manno-heptose 1,7-bisphosphate + ADP + H(+). It carries out the reaction D-glycero-beta-D-manno-heptose 1-phosphate + ATP + H(+) = ADP-D-glycero-beta-D-manno-heptose + diphosphate. The protein operates within nucleotide-sugar biosynthesis; ADP-L-glycero-beta-D-manno-heptose biosynthesis; ADP-L-glycero-beta-D-manno-heptose from D-glycero-beta-D-manno-heptose 7-phosphate: step 1/4. It functions in the pathway nucleotide-sugar biosynthesis; ADP-L-glycero-beta-D-manno-heptose biosynthesis; ADP-L-glycero-beta-D-manno-heptose from D-glycero-beta-D-manno-heptose 7-phosphate: step 3/4. Its function is as follows. Catalyzes the phosphorylation of D-glycero-D-manno-heptose 7-phosphate at the C-1 position to selectively form D-glycero-beta-D-manno-heptose-1,7-bisphosphate. In terms of biological role, catalyzes the ADP transfer from ATP to D-glycero-beta-D-manno-heptose 1-phosphate, yielding ADP-D-glycero-beta-D-manno-heptose. This chain is Bifunctional protein HldE, found in Salmonella enteritidis PT4 (strain P125109).